A 371-amino-acid polypeptide reads, in one-letter code: Glutamate 5-kinase (371 aa).

ATP is bound at residue Lys-14. Substrate is bound by residues Ser-52, Asp-139, and Asn-151. An ATP-binding site is contributed by Ser-171 to Asp-172. The region spanning Glu-275–Ser-353 is the PUA domain.

Belongs to the glutamate 5-kinase family.

The protein resides in the cytoplasm. It catalyses the reaction L-glutamate + ATP = L-glutamyl 5-phosphate + ADP. It participates in amino-acid biosynthesis; L-proline biosynthesis; L-glutamate 5-semialdehyde from L-glutamate: step 1/2. Its function is as follows. Catalyzes the transfer of a phosphate group to glutamate to form L-glutamate 5-phosphate. This is Glutamate 5-kinase from Frankia casuarinae (strain DSM 45818 / CECT 9043 / HFP020203 / CcI3).